A 341-amino-acid chain; its full sequence is Glycerol-3-phosphate dehydrogenase [NAD(P)+] (341 aa).

NADPH contacts are provided by S14, F15, R35, and K108. Sn-glycerol 3-phosphate-binding residues include K108 and G136. A140 is a binding site for NADPH. K191, D244, S254, R255, and N256 together coordinate sn-glycerol 3-phosphate. K191 serves as the catalytic Proton acceptor. NADPH is bound at residue R255. V279 and E281 together coordinate NADPH.

The protein belongs to the NAD-dependent glycerol-3-phosphate dehydrogenase family.

It localises to the cytoplasm. The enzyme catalyses sn-glycerol 3-phosphate + NAD(+) = dihydroxyacetone phosphate + NADH + H(+). It carries out the reaction sn-glycerol 3-phosphate + NADP(+) = dihydroxyacetone phosphate + NADPH + H(+). Its pathway is membrane lipid metabolism; glycerophospholipid metabolism. Its function is as follows. Catalyzes the reduction of the glycolytic intermediate dihydroxyacetone phosphate (DHAP) to sn-glycerol 3-phosphate (G3P), the key precursor for phospholipid synthesis. The chain is Glycerol-3-phosphate dehydrogenase [NAD(P)+] from Pseudomonas syringae pv. syringae (strain B728a).